A 100-amino-acid polypeptide reads, in one-letter code: Large ribosomal subunit protein uL23 (100 aa).

The protein belongs to the universal ribosomal protein uL23 family. In terms of assembly, part of the 50S ribosomal subunit. Contacts protein L29, and trigger factor when it is bound to the ribosome.

Its function is as follows. One of the early assembly proteins it binds 23S rRNA. One of the proteins that surrounds the polypeptide exit tunnel on the outside of the ribosome. Forms the main docking site for trigger factor binding to the ribosome. This chain is Large ribosomal subunit protein uL23, found in Mycobacterium ulcerans (strain Agy99).